A 100-amino-acid chain; its full sequence is Small ribosomal subunit protein uS14 (100 aa).

It belongs to the universal ribosomal protein uS14 family. Part of the 30S ribosomal subunit. Contacts proteins S3 and S10.

Binds 16S rRNA, required for the assembly of 30S particles and may also be responsible for determining the conformation of the 16S rRNA at the A site. This chain is Small ribosomal subunit protein uS14, found in Prochlorococcus marinus (strain MIT 9303).